We begin with the raw amino-acid sequence, 326 residues long: DnaJ homolog subfamily B member 6 (326 aa).

In terms of domain architecture, J spans 2 to 69; that stretch reads VDYYEVLGVQ…KKRDIYDKYG (68 aa). Positions 2–146 are interaction with HSP70; sequence VDYYEVLGVQ…TGSFFSAFSG (145 aa). An interaction with KRT18 region spans residues 119–242; sequence FEDFFGNRRG…ADDDALAEER (124 aa). Residue Arg-135 is modified to Omega-N-methylarginine. The disordered stretch occupies residues 249–326; that stretch reads ALPAQPAGLR…KKKKSTKGNH (78 aa). Ser-277 is modified (phosphoserine).

In terms of assembly, homooligomer. Interacts with BAG3, HSPB8 and STUB1. Interacts with ALKBH1. Interacts with HSP70, KRT18 and PTTG. Interacts with histone deacetylases HDAC4, HDAC6, and SIRT2, HDAC activity is required for antiaggregation. In terms of tissue distribution, widely expressed. Highest levels in testis and brain, and lower levels in heart, spleen, intestine, ovary, placenta, lung, kidney, pancreas, thymus, prostate, skeletal muscle, liver and leukocytes. In testis, expressed in germ cells in the earlier stages of differentiation pathway as well as in spermatids. In brain, expressed at a higher level in hippocampus and thalamus and a lower level in amygdala, substantia nigra, corpus callosum and caudate nucleus.

It is found in the cytoplasm. Its subcellular location is the perinuclear region. It localises to the nucleus. The protein resides in the myofibril. The protein localises to the sarcomere. It is found in the z line. Has a stimulatory effect on the ATPase activity of HSP70 in a dose-dependent and time-dependent manner and hence acts as a co-chaperone of HSP70. Plays an indispensable role in the organization of KRT8/KRT18 filaments. Acts as an endogenous molecular chaperone for neuronal proteins including huntingtin. Suppresses aggregation and toxicity of polyglutamine-containing, aggregation-prone proteins. Also reduces cellular toxicity and caspase-3 activity. Its function is as follows. Isoform B but not isoform A inhibits huntingtin aggregation. In Homo sapiens (Human), this protein is DnaJ homolog subfamily B member 6 (DNAJB6).